The chain runs to 349 residues: ATPase GET3 (349 aa).

Position 26–33 (26–33) interacts with ATP; it reads KGGVGKTT. Aspartate 57 is a catalytic residue. ATP is bound by residues glutamate 240 and asparagine 267. Zn(2+) is bound by residues cysteine 280 and cysteine 283.

It belongs to the arsA ATPase family. In terms of assembly, homodimer. Component of the Golgi to ER traffic (GET) complex, which is composed of GET1, GET2 and GET3. Within the complex, GET1 and GET2 form a heterotetramer which is stabilized by phosphatidylinositol binding and which binds to the GET3 homodimer. Interacts with the chloride channel protein GEF1.

It localises to the cytoplasm. Its subcellular location is the endoplasmic reticulum. The protein localises to the golgi apparatus. Its function is as follows. ATPase required for the post-translational delivery of tail-anchored (TA) proteins to the endoplasmic reticulum. Recognizes and selectively binds the transmembrane domain of TA proteins in the cytosol. This complex then targets to the endoplasmic reticulum by membrane-bound receptors GET1 and GET2, where the tail-anchored protein is released for insertion. This process is regulated by ATP binding and hydrolysis. ATP binding drives the homodimer towards the closed dimer state, facilitating recognition of newly synthesized TA membrane proteins. ATP hydrolysis is required for insertion. Subsequently, the homodimer reverts towards the open dimer state, lowering its affinity for the GET1-GET2 receptor, and returning it to the cytosol to initiate a new round of targeting. Cooperates with the HDEL receptor ERD2 to mediate the ATP-dependent retrieval of resident ER proteins that contain a C-terminal H-D-E-L retention signal from the Golgi to the ER. Involved in low-level resistance to the oxyanions arsenite and arsenate, and in heat tolerance. The chain is ATPase GET3 from Kluyveromyces lactis (strain ATCC 8585 / CBS 2359 / DSM 70799 / NBRC 1267 / NRRL Y-1140 / WM37) (Yeast).